The following is a 653-amino-acid chain: Pentatricopeptide repeat-containing protein At3g14730 (653 aa).

PPR repeat units lie at residues 59–93 (NVATCIATLQRCAQRKDYVSGQQIHGFMVRKGFLD), 95–119 (SPRAGTSLVNMYAKCGLMRRAVLVF), 125–159 (DVFGYNALISGFVVNGSPLDAMETYREMRANGILP), 160–193 (DKYTFPSLLKGSDAMELSDVKKVHGLAFKLGFDS), 194–224 (DCYVGSGLVTSYSKFMSVEDAQKVFDELPDR), 226–260 (DSVLWNALVNGYSQIFRFEDALLVFSKMREEGVGV), 261–295 (SRHTITSVLSAFTVSGDIDNGRSIHGLAVKTGSGS), 296–326 (DIVVSNALIDMYGKSKWLEEANSIFEAMDER), 327–361 (DLFTWNSVLCVHDYCGDHDGTLALFERMLCSGIRP), 362–396 (DIVTLTTVLPTCGRLASLRQGREIHGYMIVSGLLN), 401–431 (NEFIHNSLMDMYVKCGDLRDARMVFDSMRVK), 432–466 (DSASWNIMINGYGVQSCGELALDMFSCMCRAGVKP), 467–497 (DEITFVGLLQACSHSGFLNEGRNFLAQMETV), and 503–537 (TSDHYACVIDMLGRADKLEEAYELAISKPICDNPV). The tract at residues 538–613 (VWRSILSSCR…TPGCSWIVLK (76 aa)) is type E motif. Residues 614–644 (NGVHTFFTGNQTHPEFKSIHDWLSLVISHMH) are type E(+) motif.

It belongs to the PPR family. PCMP-E subfamily.

The protein is Pentatricopeptide repeat-containing protein At3g14730 (PCMP-E31) of Arabidopsis thaliana (Mouse-ear cress).